Here is a 449-residue protein sequence, read N- to C-terminus: uncharacterized protein (449 aa).

The signal sequence occupies residues 1 to 20 (MWTALVLIWIFSLSLSESHA). Residues 21–400 (ASNDPRNFVP…PLTQAVVDKT (380 aa)) are Extracellular-facing. Residue Asn49 is glycosylated (N-linked (GlcNAc...) asparagine). Disordered stretches follow at residues 72–101 (AHLNSMEVTTEDTSRTDVSEPATSGGAADG), 154–187 (MTAASSTPMTLALPAPTSTSTGRTPSTTATGHPS), and 215–381 (QTVA…PSTQ). Low complexity-rich tracts occupy residues 154–184 (MTAASSTPMTLALPAPTSTSTGRTPSTTATG) and 215–234 (QTVATTANTSSPMSTRPSPS). 2 stretches are compositionally biased toward polar residues: residues 255–279 (GPISQVSVDQPVVNTTNKSTPMPSN) and 352–367 (TPGTDSTGPTPRSSGG). A helical transmembrane segment spans residues 401–421 (LLLVVLLLGVTLFITVLVLFA). The Cytoplasmic segment spans residues 422-449 (LQAYESYKKKDYTQVDYLINGMYADSEM).

Highest expression in heart, placenta, liver, pancreas and colon. Also detected in brain, lung, skeletal muscle, kidney, spleen, prostate, testis, ovary and small intestine. Lowest expression in thymus and leukocytes.

It is found in the cell membrane. The protein resides in the golgi apparatus. It localises to the trans-Golgi network membrane. This is an uncharacterized protein from Homo sapiens (Human).